Consider the following 508-residue polypeptide: Histidine ammonia-lyase (508 aa).

Positions 143–145 form a cross-link, 5-imidazolinone (Ala-Gly); that stretch reads ASG. At Ser144 the chain carries 2,3-didehydroalanine (Ser).

The protein belongs to the PAL/histidase family. Post-translationally, contains an active site 4-methylidene-imidazol-5-one (MIO), which is formed autocatalytically by cyclization and dehydration of residues Ala-Ser-Gly.

The protein localises to the cytoplasm. The enzyme catalyses L-histidine = trans-urocanate + NH4(+). It participates in amino-acid degradation; L-histidine degradation into L-glutamate; N-formimidoyl-L-glutamate from L-histidine: step 1/3. The chain is Histidine ammonia-lyase from Klebsiella pneumoniae subsp. pneumoniae (strain ATCC 700721 / MGH 78578).